A 112-amino-acid chain; its full sequence is uncharacterized protein (112 aa).

Residues Glu-91 to Ser-112 are disordered. Basic and acidic residues predominate over residues Ser-103–Ser-112.

This is an uncharacterized protein from Caenorhabditis elegans.